Consider the following 464-residue polypeptide: ATP synthase subunit beta (464 aa).

Position 153 to 160 (153 to 160 (GGAGVGKT)) interacts with ATP.

Belongs to the ATPase alpha/beta chains family. F-type ATPases have 2 components, CF(1) - the catalytic core - and CF(0) - the membrane proton channel. CF(1) has five subunits: alpha(3), beta(3), gamma(1), delta(1), epsilon(1). CF(0) has three main subunits: a(1), b(2) and c(9-12). The alpha and beta chains form an alternating ring which encloses part of the gamma chain. CF(1) is attached to CF(0) by a central stalk formed by the gamma and epsilon chains, while a peripheral stalk is formed by the delta and b chains.

The protein resides in the cell inner membrane. It carries out the reaction ATP + H2O + 4 H(+)(in) = ADP + phosphate + 5 H(+)(out). Produces ATP from ADP in the presence of a proton gradient across the membrane. The catalytic sites are hosted primarily by the beta subunits. The polypeptide is ATP synthase subunit beta (Burkholderia ambifaria (strain MC40-6)).